Consider the following 386-residue polypeptide: Acetylornithine aminotransferase (386 aa).

Pyridoxal 5'-phosphate contacts are provided by residues 96–97 (GA) and Phe123. N(2)-acetyl-L-ornithine is bound at residue Arg126. 208–211 (DEVQ) lines the pyridoxal 5'-phosphate pocket. Lys237 bears the N6-(pyridoxal phosphate)lysine mark. Residue Ser265 participates in N(2)-acetyl-L-ornithine binding. Thr266 is a binding site for pyridoxal 5'-phosphate.

Belongs to the class-III pyridoxal-phosphate-dependent aminotransferase family. ArgD subfamily. In terms of assembly, homodimer. It depends on pyridoxal 5'-phosphate as a cofactor.

It is found in the cytoplasm. It carries out the reaction N(2)-acetyl-L-ornithine + 2-oxoglutarate = N-acetyl-L-glutamate 5-semialdehyde + L-glutamate. The protein operates within amino-acid biosynthesis; L-arginine biosynthesis; N(2)-acetyl-L-ornithine from L-glutamate: step 4/4. This Bacillus cereus (strain ATCC 14579 / DSM 31 / CCUG 7414 / JCM 2152 / NBRC 15305 / NCIMB 9373 / NCTC 2599 / NRRL B-3711) protein is Acetylornithine aminotransferase.